Consider the following 711-residue polypeptide: Probable cyclic nucleotide-gated ion channel 10 (711 aa).

At 1–81 (MAFSHDNRVR…QDSFLQNWNK (81 aa)) the chain is on the cytoplasmic side. Residues 82–102 (IFLFACVVALAIDPLFFYIPI) form a helical membrane-spanning segment. Over 103-116 (VDSARHCLTLDSKL) the chain is Extracellular. Residues 117-137 (EIAASLLRTLIDAFYIIHIVF) form a helical membrane-spanning segment. Over 138–170 (QFRTAYIAPSSRVFGRGELVDDAKAIALKYLSS) the chain is Cytoplasmic. The chain crosses the membrane as a helical span at residues 171–191 (YFIIDLLSILPLPQIVVLAVI). Topologically, residues 192–204 (PSVNQPVSLLTKD) are extracellular. Residues 205–225 (YLKFSIIAQYVPRILRMYPLY) form a helical membrane-spanning segment. Topologically, residues 226–243 (TEVTRTSGIVTETAWAGA) are cytoplasmic. Residues 244–264 (AWNLSLYMLASHVFGALWYLI) traverse the membrane as a helical segment. At 265–366 (SVEREDRCWQ…GQNLQTSKFV (102 aa)) the chain is on the extracellular side. A helical membrane pass occupies residues 367-387 (GEIIFAISICISGLVLFALLI). At 388–711 (GNMQKYLEST…DFTANHTTDP (324 aa)) the chain is on the cytoplasmic side. Residues 473–603 (LFEI…TFRF) and E544 each bind a nucleoside 3',5'-cyclic phosphate. Residues 589-604 (FRRLHSKQLQHTFRFY) form a calmodulin-binding region. The 30-residue stretch at 609–638 (RTWSVSFIQAAWRRYCRRKLAKSLRDEEDR) folds into the IQ domain. Residues 689-711 (YTLPLLPQKPTEPDFTANHTTDP) are disordered.

Belongs to the cyclic nucleotide-gated cation channel (TC 1.A.1.5) family. Homotetramer or heterotetramer.

Its subcellular location is the cell membrane. Functionally, probable cyclic nucleotide-gated ion channel. The chain is Probable cyclic nucleotide-gated ion channel 10 (CNGC10) from Arabidopsis thaliana (Mouse-ear cress).